The chain runs to 94 residues: UPF0235 protein TON_0641 (94 aa).

It belongs to the UPF0235 family.

In Thermococcus onnurineus (strain NA1), this protein is UPF0235 protein TON_0641.